We begin with the raw amino-acid sequence, 534 residues long: Coiled-coil domain-containing protein 183 (534 aa).

Coiled-coil stretches lie at residues 10–54, 136–209, and 323–396; these read EEQT…NIRR, DASK…DMKI, and LAQR…HSNM.

This Homo sapiens (Human) protein is Coiled-coil domain-containing protein 183 (CCDC183).